Reading from the N-terminus, the 488-residue chain is MEPAQQPPPQPAPQGPAPPSVSPAGTPAAPPAPPAGHQVVHVRGDSETDLEALFNAVMNPKTANVPQTVPMRLRKLPDSFFKPPEPKSHSRQASTDAGTAGALTPQHVRAHSSPASLQLGAVSPGTLTASGVVSGPAAAPAAQHLRQSSFEIPDDVPLPAGWEMAKTSSGQRYFLNHNDQTTTWQDPRKAMLSQLNVPAPASPAVPQTLMNSASGPLPDGWEQAMTQDGEVYYINHKNKTTSWLDPRLDPRFAMNQRITQSAPVKQPPPLAPQSPQGGVLGGGSSNQQQQIQLQQLQMEKERLRLKQQELFRQAIRNINPSTANAPKCQELALRSQLPTLEQDGGTPNAVSSPGMSQELRTMTTNSSDPFLNSGTYHSRDESTDSGLSMSSYSIPRTPDDFLNSVDEMDTGDTISQSTLPSQQSRFPDYLEALPGTNVDLGTLEGDAMNIEGEELMPSLQEALSSEILDVESVLAATKLDKESFLTWL.

Residues 1–21 (MEPAQQPPPQPAPQGPAPPSV) are compositionally biased toward pro residues. The tract at residues 1–47 (MEPAQQPPPQPAPQGPAPPSVSPAGTPAAPPAPPAGHQVVHVRGDSE) is disordered. Residue S46 is modified to Phosphoserine. The residue at position 48 (T48) is a Phosphothreonine. Positions 71–85 (MRLRKLPDSFFKPPE) form a coiled coil. The residue at position 75 (K75) is an N6-lactoyllysine. Residues 76-99 (LPDSFFKPPEPKSHSRQASTDAGT) form a disordered region. 2 positions are modified to phosphoserine: S90 and S94. T95 bears the Phosphothreonine mark. T104 bears the Phosphothreonine; by MAPK8 and MAPK9 mark. Phosphoserine occurs at positions 112, 113, 116, and 123. At S149 the chain carries Phosphoserine; by LATS1 and LATS2. 2 consecutive WW domains span residues 156 to 189 (VPLP…DPRK) and 215 to 248 (GPLP…DPRL). Disordered regions lie at residues 261–293 (SAPV…QIQL) and 339–393 (TLEQ…SSYS). Phosphoserine is present on S274. The tract at residues 276-488 (QGGVLGGGSS…LDKESFLTWL (213 aa)) is transactivation domain. The stretch at 283-344 (GSSNQQQQIQ…SQLPTLEQDG (62 aa)) forms a coiled coil. A compositionally biased stretch (polar residues) spans 348 to 376 (NAVSSPGMSQELRTMTTNSSDPFLNSGTY). A Phosphoserine; by MAPK8 and MAPK9 modification is found at S352. Phosphoserine occurs at positions 356, 366, 367, and 373. Residue S382 is modified to Phosphoserine; by LATS1 and LATS2. Positions 384 to 393 (DSGLSMSSYS) are enriched in polar residues. S385 and S388 each carry phosphoserine; by CK1. Position 392 is a phosphotyrosine; by ABL1 (Y392). T397 carries the phosphothreonine; by MAPK8 and MAPK9 modification.

The protein belongs to the YAP1 family. Part of a complex when phosphorylated that contains DSG3, PKP1, YAP1 and YWHAG; the complex is required for localization of DSG3 and YAP1 to the cell membrane in keratinocytes. Binds to the SH3 domain of the YES kinase. Binds to WBP1 and WBP2. Binds, in vitro, through the WW1 domain, to neural isoforms of ENAH that contain the PPSY motif. The phosphorylated form interacts with YWHAB. Interacts (via WW domains) with LATS1 (via PPxY motif 2). Interacts with LATS2. Interacts (via WW domain 1) with isoform JM-A of ERBB4 (via PPxY motif 2). Interacts with TEAD1, TEAD2 and TEAD3. Interacts with TP73 and HCK. Interacts with RUNX1. Interacts with TEAD4. Interacts (via WW domains) with PTPN14 (via PPxY motif 2); this interaction leads to the cytoplasmic sequestration of YAP1 and inhibits its transcriptional coactivator activity. Interacts (when phosphorylated at Ser-112) with SMAD2, SMAD3 and WWTR1. Interacts with PRRG2 (via cytoplasmic domain). Interacts (via WW domains) with PRRG4 (via cytoplasmic domain). Interacts (phosphorylated) with CLDN18; the interaction sequesters YAP1 away from the nucleus and thereby restricts transcription of YAP1 target genes. Interacts with SMAD1. Interacts with AMOT; the interaction facilitates translocation of YAP1 to the cytoplasm and tight junctions. Interacts with AMOTL2, the interaction is required for ubiquitination of AMOTL2 and localization of YAP1 to tight junctions. In terms of processing, phosphorylated by LATS1 and LATS2; leading to cytoplasmic translocation and inactivation. Phosphorylated by ABL1; leading to YAP1 stabilization, enhanced interaction with TP73 and recruitment onto proapoptotic genes; in response to DNA damage. Phosphorylation at Ser-385 and Ser-388 by CK1 is triggered by previous phosphorylation at Ser-382 by LATS proteins and leads to YAP1 ubiquitination by SCF(beta-TRCP) E3 ubiquitin ligase and subsequent degradation. Phosphorylated at Thr-104, Ser-123, Ser-352 and Thr-397 by MAPK8/JNK1 and MAPK9/JNK2, which is required for the regulation of apoptosis by YAP1. Post-translationally, lactylation by AARS1 promotes nuclear localization and stabilization of YAP1, leading to increased Hippo signaling pathway. Delactylated by SIRT1. Ubiquitinated by SCF(beta-TRCP) E3 ubiquitin ligase. As to expression, isoforms lacking the transactivation domain seen in striatal neurons (at protein level). Ubiquitous. Isoform 2 is expressed at higher levels in the neural tissues. In the embryo, it is expressed in brain, eye, and the maxillary and frontonasal components of the primary palate.

The protein resides in the cytoplasm. Its subcellular location is the nucleus. It is found in the cell junction. The protein localises to the tight junction. It localises to the cell membrane. In terms of biological role, transcriptional regulator with dual roles as a coactivator and corepressor. Critical downstream regulatory target in the Hippo signaling pathway, crucial for organ size control and tumor suppression by restricting proliferation and promoting apoptosis. The Hippo signaling pathway core involves a kinase cascade featuring STK3/MST2 and STK4/MST1, along with its regulatory partner SAV1, which phosphorylates and activates LATS1/2 in complex with their regulatory protein, MOB1. This activation leads to the phosphorylation and inactivation of the YAP1 oncoprotein and WWTR1/TAZ. Phosphorylation of YAP1 by LATS1/2 prevents its nuclear translocation, thereby regulating the expression of its target genes. The transcriptional regulation of gene expression requires TEAD transcription factors and modulates cell growth, anchorage-independent growth, and induction of epithelial-mesenchymal transition (EMT). Plays a key role in tissue tension and 3D tissue shape by regulating the cortical actomyosin network, acting via ARHGAP18, a Rho GTPase activating protein that suppresses F-actin polymerization. It also suppresses ciliogenesis by acting as a transcriptional corepressor of TEAD4 target genes AURKA and PLK1. In conjunction with WWTR1, regulates TGFB1-dependent SMAD2 and SMAD3 nuclear accumulation. Synergizes with WBP2 to enhance PGR activity. The sequence is that of Transcriptional coactivator YAP1 (Yap1) from Mus musculus (Mouse).